A 94-amino-acid polypeptide reads, in one-letter code: Acylphosphatase (94 aa).

Residues 3–90 (RVHVIVEGRV…SDEKQFRIMY (88 aa)) form the Acylphosphatase-like domain. Residues Arg18 and Asn36 contribute to the active site.

Belongs to the acylphosphatase family.

The catalysed reaction is an acyl phosphate + H2O = a carboxylate + phosphate + H(+). This is Acylphosphatase (acyP) from Geobacillus kaustophilus (strain HTA426).